The following is a 133-amino-acid chain: Profilin (133 aa).

Belongs to the profilin family.

Its function is as follows. More likely to influence phosphoinositide metabolism than actin assembly. This Vaccinia virus (strain Tian Tan) (VACV) protein is Profilin.